A 376-amino-acid chain; its full sequence is MSEGLYEKFLAPDEPFPLLSQRGSASEEGCLDVSDFGCQLSSCHRTDPLHRFHSNRWNLTSCGTSVASSECSEELFSSVSVGDQDDCYSLLDDQDFTSFDLFPEGSVCSDVSSSISTYWDWSDSEFEWQLPGSDIASGSDVLSDIIPSIPSSPCLPSRKKNKHRNLDELPWSAMTNDEQVEYIEYLSRKVSTEMGLREQLDIIKIIDPTAQISPTDSEFIIELNCLTDEKLKQVRSYIKEHSPRQRSTRESWKRTSYSTASTSGVSGASVSSSSASMVSTASSTGSSGGNSASNSSANMSRTHSDSNLSASAAERIRDSKKRSKQRKLQQKALRKRQLKEQRQARKERLSGLFLNEEVLSVKVNEEDHEGDVDVLM.

A compositionally biased stretch (basic and acidic residues) spans 237 to 253 (YIKEHSPRQRSTRESWK). The interval 237–350 (YIKEHSPRQR…QRQARKERLS (114 aa)) is disordered. Low complexity predominate over residues 255–300 (TSYSTASTSGVSGASVSSSSASMVSTASSTGSSGGNSASNSSANMS). The segment covering 318-337 (DSKKRSKQRKLQQKALRKRQ) has biased composition (basic residues). Residues 320 to 349 (KKRSKQRKLQQKALRKRQLKEQRQARKERL) are a coiled coil. Residues 338-349 (LKEQRQARKERL) show a composition bias toward basic and acidic residues.

The protein belongs to the FAM199 family.

This chain is Protein FAM199X (fam199x), found in Xenopus tropicalis (Western clawed frog).